Consider the following 61-residue polypeptide: Large ribosomal subunit protein eL29y (61 aa).

The interval 1-61 (MAKSKNHTAH…KSGENAGVEE (61 aa)) is disordered. Over residues 15 to 31 (KAHKNGIKKPRRHRHTP) the composition is skewed to basic residues.

Belongs to the eukaryotic ribosomal protein eL29 family.

This chain is Large ribosomal subunit protein eL29y (RPL29B), found in Arabidopsis thaliana (Mouse-ear cress).